Here is a 176-residue protein sequence, read N- to C-terminus: Ribosome maturation factor RimM (176 aa).

Positions 101 to 173 constitute a PRC barrel domain; it reads EGEYYHYRLI…RMVVDLPEGL (73 aa).

Belongs to the RimM family. In terms of assembly, binds ribosomal protein uS19.

The protein localises to the cytoplasm. Functionally, an accessory protein needed during the final step in the assembly of 30S ribosomal subunit, possibly for assembly of the head region. Essential for efficient processing of 16S rRNA. May be needed both before and after RbfA during the maturation of 16S rRNA. It has affinity for free ribosomal 30S subunits but not for 70S ribosomes. This is Ribosome maturation factor RimM from Syntrophobacter fumaroxidans (strain DSM 10017 / MPOB).